Here is a 652-residue protein sequence, read N- to C-terminus: DNA mismatch repair protein MutL (652 aa).

Belongs to the DNA mismatch repair MutL/HexB family.

Functionally, this protein is involved in the repair of mismatches in DNA. It is required for dam-dependent methyl-directed DNA mismatch repair. May act as a 'molecular matchmaker', a protein that promotes the formation of a stable complex between two or more DNA-binding proteins in an ATP-dependent manner without itself being part of a final effector complex. This chain is DNA mismatch repair protein MutL, found in Aliivibrio salmonicida (strain LFI1238) (Vibrio salmonicida (strain LFI1238)).